A 120-amino-acid chain; its full sequence is Large ribosomal subunit protein uL18 (120 aa).

The protein belongs to the universal ribosomal protein uL18 family. As to quaternary structure, part of the 50S ribosomal subunit; part of the 5S rRNA/L5/L18/L25 subcomplex. Contacts the 5S and 23S rRNAs.

In terms of biological role, this is one of the proteins that bind and probably mediate the attachment of the 5S RNA into the large ribosomal subunit, where it forms part of the central protuberance. The sequence is that of Large ribosomal subunit protein uL18 from Geobacillus sp. (strain WCH70).